Consider the following 197-residue polypeptide: Dephospho-CoA kinase (197 aa).

The DPCK domain occupies 3–197 (VYGLTGGIGS…QSLLHTHQNT (195 aa)). An ATP-binding site is contributed by 11–16 (GSGKTT).

It belongs to the CoaE family.

The protein localises to the cytoplasm. The catalysed reaction is 3'-dephospho-CoA + ATP = ADP + CoA + H(+). Its pathway is cofactor biosynthesis; coenzyme A biosynthesis; CoA from (R)-pantothenate: step 5/5. In terms of biological role, catalyzes the phosphorylation of the 3'-hydroxyl group of dephosphocoenzyme A to form coenzyme A. This Hydrogenovibrio crunogenus (strain DSM 25203 / XCL-2) (Thiomicrospira crunogena) protein is Dephospho-CoA kinase.